We begin with the raw amino-acid sequence, 1385 residues long: DNA-directed RNA polymerase subunit beta (1385 aa).

It belongs to the RNA polymerase beta chain family. As to quaternary structure, the RNAP catalytic core consists of 2 alpha, 1 beta, 1 beta' and 1 omega subunit. When a sigma factor is associated with the core the holoenzyme is formed, which can initiate transcription.

It catalyses the reaction RNA(n) + a ribonucleoside 5'-triphosphate = RNA(n+1) + diphosphate. Its function is as follows. DNA-dependent RNA polymerase catalyzes the transcription of DNA into RNA using the four ribonucleoside triphosphates as substrates. This is DNA-directed RNA polymerase subunit beta from Jannaschia sp. (strain CCS1).